Consider the following 318-residue polypeptide: Probable mitochondrial 2-oxoglutarate/malate carrier protein (318 aa).

Solcar repeat units lie at residues 22–111, 119–210, and 219–309; these read QSQL…IKDI, LPFT…TKQL, and DDIK…LNIL. Transmembrane regions (helical) follow at residues 28–48, 79–99, 125–145, 185–205, 225–245, and 281–301; these read FVIGGLAGMLSSAFTHPIDSL, GFFTLYKGLSASLLRQATYTT, IMVGMLSGAGGAIVGTPADLT, GCSPNLIRAMFMTAGQVSSYD, LIASTTAAFVAAVATSPLDVI, and FYKGFNPYFMRLGPQTILTFI.

It belongs to the mitochondrial carrier (TC 2.A.29) family.

The protein localises to the mitochondrion inner membrane. Functionally, mitochondrial solute carriers shuttle metabolites, nucleotides, and cofactors through the mitochondrial inner membrane. Catalyzes the transport of 2-oxoglutarate across the inner mitochondrial membrane in an electroneutral exchange for malate or other dicarboxylic acids, and plays an important role in several metabolic processes, including the malate-aspartate shuttle, the oxoglutarate/isocitrate shuttle, in gluconeogenesis from lactate, and in nitrogen metabolism. This Dictyostelium discoideum (Social amoeba) protein is Probable mitochondrial 2-oxoglutarate/malate carrier protein (ucpC).